Consider the following 757-residue polypeptide: Exo-alpha-(1-&gt;6)-L-arabinopyranosidase (757 aa).

Aspartate 232 is a catalytic residue.

The protein belongs to the glycosyl hydrolase 3 family. As to quaternary structure, homotetramer.

With respect to regulation, completely inhibited by Cu(2+) and activated by Co(2+). In terms of biological role, catalyzes the hydrolysis of a non-reducing terminal alpha-L-arabinopyranosidic linkage in ginsenoside Rb2 (alpha-L-arabinopyranosyl-(1-&gt;6)-alpha-D-glucopyranosyl) to release alpha-D-glucopyranosyl (Rd). It is not able to hydrolyze alpha-L-arabinofuranosyl-(1-&gt;6)-alpha-D-glucopyranosyl (Rc). The chain is Exo-alpha-(1-&gt;6)-L-arabinopyranosidase (apy) from Bifidobacterium longum.